The primary structure comprises 196 residues: ATP-dependent Clp protease proteolytic subunit (196 aa).

Catalysis depends on S98, which acts as the Nucleophile. The active site involves H123.

It belongs to the peptidase S14 family. As to quaternary structure, fourteen ClpP subunits assemble into 2 heptameric rings which stack back to back to give a disk-like structure with a central cavity, resembling the structure of eukaryotic proteasomes.

The protein localises to the cytoplasm. The catalysed reaction is Hydrolysis of proteins to small peptides in the presence of ATP and magnesium. alpha-casein is the usual test substrate. In the absence of ATP, only oligopeptides shorter than five residues are hydrolyzed (such as succinyl-Leu-Tyr-|-NHMec, and Leu-Tyr-Leu-|-Tyr-Trp, in which cleavage of the -Tyr-|-Leu- and -Tyr-|-Trp bonds also occurs).. In terms of biological role, cleaves peptides in various proteins in a process that requires ATP hydrolysis. Has a chymotrypsin-like activity. Plays a major role in the degradation of misfolded proteins. This chain is ATP-dependent Clp protease proteolytic subunit, found in Lactiplantibacillus plantarum (strain ATCC BAA-793 / NCIMB 8826 / WCFS1) (Lactobacillus plantarum).